Reading from the N-terminus, the 229-residue chain is Large ribosomal subunit protein uL1 (229 aa).

This sequence belongs to the universal ribosomal protein uL1 family. As to quaternary structure, part of the 50S ribosomal subunit.

Binds directly to 23S rRNA. The L1 stalk is quite mobile in the ribosome, and is involved in E site tRNA release. In terms of biological role, protein L1 is also a translational repressor protein, it controls the translation of the L11 operon by binding to its mRNA. This Clostridium perfringens (strain ATCC 13124 / DSM 756 / JCM 1290 / NCIMB 6125 / NCTC 8237 / Type A) protein is Large ribosomal subunit protein uL1.